The sequence spans 435 residues: Enolase (435 aa).

Glutamine 163 contributes to the (2R)-2-phosphoglycerate binding site. Glutamate 205 functions as the Proton donor in the catalytic mechanism. Residues aspartate 243, glutamate 292, and aspartate 319 each contribute to the Mg(2+) site. The (2R)-2-phosphoglycerate site is built by lysine 344, arginine 373, serine 374, and lysine 395. Lysine 344 serves as the catalytic Proton acceptor.

Belongs to the enolase family. The cofactor is Mg(2+).

The protein localises to the cytoplasm. The protein resides in the secreted. It is found in the cell surface. The enzyme catalyses (2R)-2-phosphoglycerate = phosphoenolpyruvate + H2O. Its pathway is carbohydrate degradation; glycolysis; pyruvate from D-glyceraldehyde 3-phosphate: step 4/5. Functionally, catalyzes the reversible conversion of 2-phosphoglycerate (2-PG) into phosphoenolpyruvate (PEP). It is essential for the degradation of carbohydrates via glycolysis. This is Enolase from Streptococcus pyogenes serotype M12 (strain MGAS2096).